The following is a 153-amino-acid chain: uncharacterized protein (153 aa).

The segment at 1-88 is disordered; the sequence is MDKDRPGLPA…VPPPQLDHPG (88 aa).

This is an uncharacterized protein from Epstein-Barr virus (strain P3HR-1) (HHV-4).